Consider the following 286-residue polypeptide: 33 kDa chaperonin (286 aa).

2 cysteine pairs are disulfide-bonded: C236–C238 and C264–C267.

This sequence belongs to the HSP33 family. In terms of processing, under oxidizing conditions two disulfide bonds are formed involving the reactive cysteines. Under reducing conditions zinc is bound to the reactive cysteines and the protein is inactive.

It localises to the cytoplasm. Functionally, redox regulated molecular chaperone. Protects both thermally unfolding and oxidatively damaged proteins from irreversible aggregation. Plays an important role in the bacterial defense system toward oxidative stress. This Carboxydothermus hydrogenoformans (strain ATCC BAA-161 / DSM 6008 / Z-2901) protein is 33 kDa chaperonin.